The chain runs to 392 residues: 1-deoxy-D-xylulose 5-phosphate reductoisomerase (392 aa).

Residues threonine 14, glycine 15, serine 16, isoleucine 17, glycine 40, glutamine 43, and asparagine 126 each contribute to the NADPH site. Residue lysine 127 coordinates 1-deoxy-D-xylulose 5-phosphate. NADPH is bound at residue glutamate 128. Aspartate 150 provides a ligand contact to Mn(2+). 1-deoxy-D-xylulose 5-phosphate is bound by residues serine 151, glutamate 152, serine 176, and histidine 199. Position 152 (glutamate 152) interacts with Mn(2+). Glycine 205 contributes to the NADPH binding site. Residues serine 212, asparagine 217, lysine 218, and glutamate 221 each contribute to the 1-deoxy-D-xylulose 5-phosphate site. Glutamate 221 is a Mn(2+) binding site.

It belongs to the DXR family. Mg(2+) is required as a cofactor. Mn(2+) serves as cofactor.

The enzyme catalyses 2-C-methyl-D-erythritol 4-phosphate + NADP(+) = 1-deoxy-D-xylulose 5-phosphate + NADPH + H(+). Its pathway is isoprenoid biosynthesis; isopentenyl diphosphate biosynthesis via DXP pathway; isopentenyl diphosphate from 1-deoxy-D-xylulose 5-phosphate: step 1/6. Catalyzes the NADPH-dependent rearrangement and reduction of 1-deoxy-D-xylulose-5-phosphate (DXP) to 2-C-methyl-D-erythritol 4-phosphate (MEP). The protein is 1-deoxy-D-xylulose 5-phosphate reductoisomerase of Corynebacterium glutamicum (strain ATCC 13032 / DSM 20300 / JCM 1318 / BCRC 11384 / CCUG 27702 / LMG 3730 / NBRC 12168 / NCIMB 10025 / NRRL B-2784 / 534).